Consider the following 390-residue polypeptide: 23S rRNA (uracil(747)-C(5))-methyltransferase RlmC (390 aa).

Cys12, Cys20, Cys23, and Cys100 together coordinate [4Fe-4S] cluster. S-adenosyl-L-methionine-binding residues include Gln225, Phe254, Glu275, and Asn322. Residue Cys349 is the Nucleophile of the active site.

Belongs to the class I-like SAM-binding methyltransferase superfamily. RNA M5U methyltransferase family. RlmC subfamily.

It catalyses the reaction uridine(747) in 23S rRNA + S-adenosyl-L-methionine = 5-methyluridine(747) in 23S rRNA + S-adenosyl-L-homocysteine + H(+). Catalyzes the formation of 5-methyl-uridine at position 747 (m5U747) in 23S rRNA. The polypeptide is 23S rRNA (uracil(747)-C(5))-methyltransferase RlmC (Shewanella baltica (strain OS223)).